The chain runs to 792 residues: Phenylalanine--tRNA ligase beta subunit (792 aa).

One can recognise a tRNA-binding domain in the interval Gly-39–Ala-147. The B5 domain maps to Pro-400–Thr-475. Residues Asp-453, Asp-459, Glu-462, and Glu-463 each contribute to the Mg(2+) site. The FDX-ACB domain maps to Ser-698–Arg-791.

The protein belongs to the phenylalanyl-tRNA synthetase beta subunit family. Type 1 subfamily. Tetramer of two alpha and two beta subunits. Requires Mg(2+) as cofactor.

Its subcellular location is the cytoplasm. It catalyses the reaction tRNA(Phe) + L-phenylalanine + ATP = L-phenylalanyl-tRNA(Phe) + AMP + diphosphate + H(+). This Xylella fastidiosa (strain 9a5c) protein is Phenylalanine--tRNA ligase beta subunit (pheT).